Here is a 257-residue protein sequence, read N- to C-terminus: Small ribosomal subunit protein uS15m (257 aa).

Residues Met1–Pro57 constitute a mitochondrion transit peptide. The disordered stretch occupies residues Lys228 to Asn257. Basic and acidic residues predominate over residues Ala234 to Pro243.

It belongs to the universal ribosomal protein uS15 family. In terms of assembly, component of the mitochondrial ribosome small subunit (28S) which comprises a 12S rRNA and about 30 distinct proteins. Interacts with METTL17.

It is found in the mitochondrion matrix. This chain is Small ribosomal subunit protein uS15m (Mrps15), found in Rattus norvegicus (Rat).